We begin with the raw amino-acid sequence, 510 residues long: NAD(P)H-quinone oxidoreductase subunit 2 B, chloroplastic (510 aa).

The next 13 helical transmembrane spans lie at 24–44 (LLLF…GLIL), 57–77 (LPWF…ALLF), 99–119 (IFQF…VEYI), 124–144 (MAIT…MFLC), 149–169 (LITI…LSGY), 183–203 (YLLM…WLYG), 227–247 (PGIS…LSPA), 295–315 (WHLL…IIAI), 323–343 (MLAY…IVGD), 354–374 (YMLF…LFGL), 395–415 (ALSL…AGFF), 428–448 (GLYS…YYYL), and 484–504 (MIVC…IIAI).

Belongs to the complex I subunit 2 family. In terms of assembly, NDH is composed of at least 16 different subunits, 5 of which are encoded in the nucleus.

The protein localises to the plastid. Its subcellular location is the chloroplast thylakoid membrane. The catalysed reaction is a plastoquinone + NADH + (n+1) H(+)(in) = a plastoquinol + NAD(+) + n H(+)(out). It catalyses the reaction a plastoquinone + NADPH + (n+1) H(+)(in) = a plastoquinol + NADP(+) + n H(+)(out). NDH shuttles electrons from NAD(P)H:plastoquinone, via FMN and iron-sulfur (Fe-S) centers, to quinones in the photosynthetic chain and possibly in a chloroplast respiratory chain. The immediate electron acceptor for the enzyme in this species is believed to be plastoquinone. Couples the redox reaction to proton translocation, and thus conserves the redox energy in a proton gradient. This Jasminum nudiflorum (Winter jasmine) protein is NAD(P)H-quinone oxidoreductase subunit 2 B, chloroplastic.